The following is a 156-amino-acid chain: Transcription elongation factor GreA 1 (156 aa).

Residues 43-74 (RSENAEYSSAKRDLGRLESRLRYLNKQLQYAQ) are a coiled coil.

Belongs to the GreA/GreB family.

In terms of biological role, necessary for efficient RNA polymerase transcription elongation past template-encoded arresting sites. The arresting sites in DNA have the property of trapping a certain fraction of elongating RNA polymerases that pass through, resulting in locked ternary complexes. Cleavage of the nascent transcript by cleavage factors such as GreA or GreB allows the resumption of elongation from the new 3'terminus. GreA releases sequences of 2 to 3 nucleotides. This Lactiplantibacillus plantarum (strain ATCC BAA-793 / NCIMB 8826 / WCFS1) (Lactobacillus plantarum) protein is Transcription elongation factor GreA 1.